The sequence spans 170 residues: MPSSWKESGLRWYWVVVLVFVADQLSKQWVLANFDLRESINLLPFFNFTYVRNYGAAFSFLNDAGGWQRWLFTLVAVGFSTLLTVWLRKQPKGLWRLNLAYTLVIGGALGNLIDRLQHGFVVDFLDFYWKTSHFPAFNIADSAICVGAGLIILDSFISERKPNGEDVAKG.

The next 3 membrane-spanning stretches (helical) occupy residues tryptophan 12–alanine 32, tryptophan 67–leucine 87, and glycine 93–isoleucine 113. Residues aspartate 123 and aspartate 141 contribute to the active site. A helical membrane pass occupies residues histidine 133 to leucine 153.

The protein belongs to the peptidase A8 family.

The protein localises to the cell inner membrane. It carries out the reaction Release of signal peptides from bacterial membrane prolipoproteins. Hydrolyzes -Xaa-Yaa-Zaa-|-(S,diacylglyceryl)Cys-, in which Xaa is hydrophobic (preferably Leu), and Yaa (Ala or Ser) and Zaa (Gly or Ala) have small, neutral side chains.. The protein operates within protein modification; lipoprotein biosynthesis (signal peptide cleavage). Its function is as follows. This protein specifically catalyzes the removal of signal peptides from prolipoproteins. In Shewanella loihica (strain ATCC BAA-1088 / PV-4), this protein is Lipoprotein signal peptidase.